The chain runs to 1775 residues: Atrochrysone carboxylic acid synthase (1775 aa).

Residues 35–262 form the Starter acyltransferase (SAT) domain; sequence LRRLQALSKD…YAKWASLPIF (228 aa). The Ketosynthase family 3 (KS3) domain occupies 400-833; sequence DSKIAIVGMS…GGNTTMLLEE (434 aa). Residues C573, H708, and H750 each act as for beta-ketoacyl synthase activity in the active site. Residues 934 to 1244 enclose the Malonyl-CoA:ACP transacylase (MAT) domain; that stretch reads FAFTGQGAFY…ENNWNTLADS (311 aa). The interval 1313–1631 is product template (PT) domain; that stretch reads TSSIHQVLQE…RSLLPTFFSP (319 aa). An N-terminal hotdog fold region spans residues 1317–1451; it reads HQVLQEDVTG…SAVVEYGDAN (135 aa). Positions 1317–1626 constitute a PKS/mFAS DH domain; sequence HQVLQEDVTG…FRRFPRSLLP (310 aa). H1349 (proton acceptor; for dehydratase activity) is an active-site residue. Positions 1480–1626 are C-terminal hotdog fold; it reads AAVLPRNMAY…FRRFPRSLLP (147 aa). D1537 (proton donor; for dehydratase activity) is an active-site residue. The interval 1671–1697 is disordered; that stretch reads TAAPVPAPAPVPAKRAEPAPAAAQAAA. A compositionally biased stretch (low complexity) spans 1688–1697; the sequence is PAPAAAQAAA. The Carrier domain maps to 1697–1774; it reads ATQNPTITGA…ELKTYIEETF (78 aa). S1734 is subject to O-(pantetheine 4'-phosphoryl)serine.

It carries out the reaction holo-[ACP] + 8 malonyl-CoA + 8 H(+) = atrochrysone carboxyl-[ACP] + 8 CO2 + 8 CoA + 2 H2O. It functions in the pathway secondary metabolite biosynthesis. Functionally, non-reducing polyketide synthase; part of the gene cluster that mediates the biosynthesis of physcion, a natural anthraquinone fungicide that can prevent plant fungal infections. The pathway begins with the polyketide synthase AcPKS that condenses 8 malonyl-CoA units to synthesize atrochrysone thioester which is released from the synthase by the atrochrysone carboxyl ACP thioesterase AcTE that breaks the thioester bond and leads to free atrochrysone carboxylic acid. Spontaneous decarboxylation of atrochrysone carboxylic acid leads to the formation of atrochrysone. Then, atrochrysone undergoes spontaneous dehydration and oxidation, giving the products emodin anthrone and emodin. The O-methyltransferase AcOMT then methylates the C-6 hydroxyl of emodin to form physcion. The protein is Atrochrysone carboxylic acid synthase of Aspergillus chevalieri (Eurotium chevalieri).